We begin with the raw amino-acid sequence, 461 residues long: Cysteine--tRNA ligase (461 aa).

Cys28 contacts Zn(2+). The 'HIGH' region motif lies at 30 to 40 (ITIYDLCHIGH). 3 residues coordinate Zn(2+): Cys209, His234, and Glu238. The 'KMSKS' region signature appears at 266 to 270 (KMSKS). Residue Lys269 participates in ATP binding.

The protein belongs to the class-I aminoacyl-tRNA synthetase family. As to quaternary structure, monomer. Zn(2+) is required as a cofactor.

Its subcellular location is the cytoplasm. The enzyme catalyses tRNA(Cys) + L-cysteine + ATP = L-cysteinyl-tRNA(Cys) + AMP + diphosphate. In Yersinia enterocolitica serotype O:8 / biotype 1B (strain NCTC 13174 / 8081), this protein is Cysteine--tRNA ligase.